Consider the following 202-residue polypeptide: Lymphotoxin-alpha (202 aa).

The first 33 residues, methionine 1–glycine 33, serve as a signal peptide directing secretion. Residues proline 60–leucine 202 form the THD domain. An N-linked (GlcNAc...) asparagine glycan is attached at asparagine 93.

It belongs to the tumor necrosis factor family. Homotrimer, and heterotrimer of either two LTB and one LTA subunits or (less prevalent) two LTA and one LTB subunits. Interacts with TNFRSF14.

The protein localises to the secreted. It localises to the membrane. In terms of biological role, cytokine that in its homotrimeric form binds to TNFRSF1A/TNFR1, TNFRSF1B/TNFBR and TNFRSF14/HVEM. In its heterotrimeric form with LTB binds to TNFRSF3/LTBR. Lymphotoxin is produced by lymphocytes and is cytotoxic for a wide range of tumor cells in vitro and in vivo. This Rattus norvegicus (Rat) protein is Lymphotoxin-alpha (Lta).